Reading from the N-terminus, the 201-residue chain is Probable nicotinate-nucleotide adenylyltransferase (201 aa).

It belongs to the NadD family.

It carries out the reaction nicotinate beta-D-ribonucleotide + ATP + H(+) = deamido-NAD(+) + diphosphate. It participates in cofactor biosynthesis; NAD(+) biosynthesis; deamido-NAD(+) from nicotinate D-ribonucleotide: step 1/1. In terms of biological role, catalyzes the reversible adenylation of nicotinate mononucleotide (NaMN) to nicotinic acid adenine dinucleotide (NaAD). The sequence is that of Probable nicotinate-nucleotide adenylyltransferase from Bacteroides fragilis (strain YCH46).